We begin with the raw amino-acid sequence, 134 residues long: Bradykinin-related peptides (134 aa).

The signal sequence occupies residues 1–22; sequence MAFLKKSLFLVLFLGVVSLSFC. Propeptides lie at residues 23-44, 71-82, and 99-121; these read EEEK…ESLG, RSISGLTPIRLS, and ISEA…PLRG. A compositionally biased stretch (basic and acidic residues) spans 24-33; that stretch reads EEKREEHEEE. The interval 24-71 is disordered; sequence EEKREEHEEEKRDEEDAESLGKRYGGLSPLRISKRVPPGFTPFRSPAR. P126 carries the 4-hydroxyproline; partial; in form [Hyp3]-bradykinin and [Hyp3]-bradykinin-Val,Asp modification.

It belongs to the frog skin active peptide (FSAP) family. Bradykinin-related peptide subfamily. In terms of tissue distribution, expressed by the skin glands. Expression levels in inguinal glands are much higher than in granular glands.

It is found in the secreted. May produce in vitro relaxation of rat arterial smooth muscle and constriction of intestinal smooth muscle. May target bradykinin receptors (BDKRB). In Physalaemus nattereri (Cuyaba dwarf frog), this protein is Bradykinin-related peptides.